A 944-amino-acid polypeptide reads, in one-letter code: Lactoferrin-binding protein A (944 aa).

Positions 1-27 are cleaved as a signal peptide; the sequence is MNKKHGFSLTLTALAIAAAFPSYAANP. The 127-residue stretch at 52 to 178 folds into the TBDR plug domain; the sequence is RRSKEATGLG…LGGAVAFRTK (127 aa). The TBDR beta-barrel domain occupies 189-944; that stretch reads SWGIQAKTAY…NFSLALEMKF (756 aa). A TonB C-terminal box motif is present at residues 927-944; it reads GRYAAPGRNFSLALEMKF.

It belongs to the TonB-dependent receptor family.

It is found in the cell outer membrane. Its function is as follows. Unknown. May be an iron-siderophore receptor. In Neisseria meningitidis serogroup A / serotype 4A (strain DSM 15465 / Z2491), this protein is Lactoferrin-binding protein A (lbpA).